We begin with the raw amino-acid sequence, 81 residues long: Cell division protein ZapB (81 aa).

The stretch at 5–81 (LEVFEKLESK…QALLGRMEEV (77 aa)) forms a coiled coil. Residues 43 to 64 (VQSAQHGREELERENSQLKEQQ) are disordered. Residues 48 to 59 (HGREELERENSQ) show a composition bias toward basic and acidic residues.

This sequence belongs to the ZapB family. In terms of assembly, homodimer. The ends of the coiled-coil dimer bind to each other, forming polymers. Interacts with FtsZ.

It localises to the cytoplasm. In terms of biological role, non-essential, abundant cell division factor that is required for proper Z-ring formation. It is recruited early to the divisome by direct interaction with FtsZ, stimulating Z-ring assembly and thereby promoting cell division earlier in the cell cycle. Its recruitment to the Z-ring requires functional FtsA or ZipA. In Klebsiella pneumoniae subsp. pneumoniae (strain ATCC 700721 / MGH 78578), this protein is Cell division protein ZapB.